Consider the following 213-residue polypeptide: 2,3-bisphosphoglycerate-dependent phosphoglycerate mutase (213 aa).

Substrate-binding positions include 8–15 (RHGQSEWN), 21–22 (TG), R58, 84–87 (ERNY), K95, 111–112 (RR), and 155–156 (GN). H9 serves as the catalytic Tele-phosphohistidine intermediate. E84 (proton donor/acceptor) is an active-site residue.

Belongs to the phosphoglycerate mutase family. BPG-dependent PGAM subfamily.

It carries out the reaction (2R)-2-phosphoglycerate = (2R)-3-phosphoglycerate. Its pathway is carbohydrate degradation; glycolysis; pyruvate from D-glyceraldehyde 3-phosphate: step 3/5. Its function is as follows. Catalyzes the interconversion of 2-phosphoglycerate and 3-phosphoglycerate. In Cytophaga hutchinsonii (strain ATCC 33406 / DSM 1761 / CIP 103989 / NBRC 15051 / NCIMB 9469 / D465), this protein is 2,3-bisphosphoglycerate-dependent phosphoglycerate mutase.